The sequence spans 247 residues: Pyrroloquinoline-quinone synthase (247 aa).

Belongs to the PqqC family.

It carries out the reaction 6-(2-amino-2-carboxyethyl)-7,8-dioxo-1,2,3,4,7,8-hexahydroquinoline-2,4-dicarboxylate + 3 O2 = pyrroloquinoline quinone + 2 H2O2 + 2 H2O + H(+). The protein operates within cofactor biosynthesis; pyrroloquinoline quinone biosynthesis. Ring cyclization and eight-electron oxidation of 3a-(2-amino-2-carboxyethyl)-4,5-dioxo-4,5,6,7,8,9-hexahydroquinoline-7,9-dicarboxylic-acid to PQQ. The polypeptide is Pyrroloquinoline-quinone synthase (Rhizobium rhizogenes (strain K84 / ATCC BAA-868) (Agrobacterium radiobacter)).